A 156-amino-acid polypeptide reads, in one-letter code: Small ribosomal subunit protein uS7 (156 aa).

The protein belongs to the universal ribosomal protein uS7 family. In terms of assembly, part of the 30S ribosomal subunit. Contacts proteins S9 and S11.

One of the primary rRNA binding proteins, it binds directly to 16S rRNA where it nucleates assembly of the head domain of the 30S subunit. Is located at the subunit interface close to the decoding center, probably blocks exit of the E-site tRNA. In Mycobacterium avium (strain 104), this protein is Small ribosomal subunit protein uS7.